A 391-amino-acid polypeptide reads, in one-letter code: Formate-dependent phosphoribosylglycinamide formyltransferase (391 aa).

Residues E20–L21 and E80 contribute to the N(1)-(5-phospho-beta-D-ribosyl)glycinamide site. ATP contacts are provided by residues R112, K153, S158–Q163, E193–I196, and E201. Residues R117–L306 enclose the ATP-grasp domain. 2 residues coordinate Mg(2+): E265 and E277. N(1)-(5-phospho-beta-D-ribosyl)glycinamide contacts are provided by residues D284, K354, and R361–R362.

The protein belongs to the PurK/PurT family. In terms of assembly, homodimer.

The catalysed reaction is N(1)-(5-phospho-beta-D-ribosyl)glycinamide + formate + ATP = N(2)-formyl-N(1)-(5-phospho-beta-D-ribosyl)glycinamide + ADP + phosphate + H(+). It participates in purine metabolism; IMP biosynthesis via de novo pathway; N(2)-formyl-N(1)-(5-phospho-D-ribosyl)glycinamide from N(1)-(5-phospho-D-ribosyl)glycinamide (formate route): step 1/1. In terms of biological role, involved in the de novo purine biosynthesis. Catalyzes the transfer of formate to 5-phospho-ribosyl-glycinamide (GAR), producing 5-phospho-ribosyl-N-formylglycinamide (FGAR). Formate is provided by PurU via hydrolysis of 10-formyl-tetrahydrofolate. The protein is Formate-dependent phosphoribosylglycinamide formyltransferase of Shewanella sp. (strain MR-7).